The primary structure comprises 202 residues: uncharacterized protein (202 aa).

The region spanning 1–78 is the GST N-terminal domain; it reads MKLVGSYTSP…YIELMNVAPA (78 aa). Glutathione contacts are provided by residues Ser-9, Val-49, and 62-63; that span reads DS. Residues 83–202 form the GST C-terminal domain; it reads DPLESLRVRK…SFARTEPPKA (120 aa).

The protein belongs to the GST superfamily. HSP26 family.

Functionally, glutathione (GSH) transferase homolog, that might be involved in selenium metabolism. This is an uncharacterized protein from Escherichia coli (strain K12).